A 118-amino-acid chain; its full sequence is Large ribosomal subunit protein bL20 (118 aa).

This sequence belongs to the bacterial ribosomal protein bL20 family.

Its function is as follows. Binds directly to 23S ribosomal RNA and is necessary for the in vitro assembly process of the 50S ribosomal subunit. It is not involved in the protein synthesizing functions of that subunit. The sequence is that of Large ribosomal subunit protein bL20 from Klebsiella pneumoniae (strain 342).